Here is a 406-residue protein sequence, read N- to C-terminus: Histidine--tRNA ligase (406 aa).

This sequence belongs to the class-II aminoacyl-tRNA synthetase family. As to quaternary structure, homodimer.

The protein localises to the cytoplasm. It carries out the reaction tRNA(His) + L-histidine + ATP = L-histidyl-tRNA(His) + AMP + diphosphate + H(+). The polypeptide is Histidine--tRNA ligase (Nitratiruptor sp. (strain SB155-2)).